Here is a 465-residue protein sequence, read N- to C-terminus: Argininosuccinate lyase (465 aa).

The protein belongs to the lyase 1 family. Argininosuccinate lyase subfamily.

Its subcellular location is the cytoplasm. The catalysed reaction is 2-(N(omega)-L-arginino)succinate = fumarate + L-arginine. It participates in amino-acid biosynthesis; L-arginine biosynthesis; L-arginine from L-ornithine and carbamoyl phosphate: step 3/3. The protein is Argininosuccinate lyase of Aromatoleum aromaticum (strain DSM 19018 / LMG 30748 / EbN1) (Azoarcus sp. (strain EbN1)).